Reading from the N-terminus, the 975-residue chain is MTQQPQDDFDRSVEDAQAWMKAVQDQLQVNDNTQGPRAALEARLWETEKICQLEPEGRVRVDLVLRMAEALLACCPGDQKPGILARLKDIKAQWEETVTYMTHCHSRIEWVWLHWSEYLLARDEFYRWFQKMMVTLEPHIELQLGLKEKQWQLSHAQVLLHNVDNQAVLLDRLLEEAASLFNRIGDPSVDEDAQKRMKAEYDAVKAKAQKRVDLLEQVAREHEEYQAGVDEFQLWLKAVVEKVNGCLGRNCKLPITQRLSTLQDIAKDFPRGEESLETLEEQSAGVIRNTSPLGAEKITGELEEMRKVLEKLRALWEEEEERLRGLLRSRGAWEQQIKQLEAELSEFRMVLQRLAQEGLQPAAKAGTEDELVAHWRRYSATRAALASEEPRVDRLQAQLKELIVFPHNLKPLSDSVIATIQEYQSLKVKSARLRNAAAVELWQHFQRPLQDLQLWKALAQRLLEVTASLPDLPSLHTFLPQIEAALMESSRLKELLTMLQLKKDLLIGIFGQERATALLEQVAGSMRDRDLLHNSLLQRKSKLQSLLAQHKDFGAAFEPLQRKLLDLQVRVQAEKGLQRDLPGKQAQLSRLQGLQEEGLDLGAQMEAARPLVQENPNHQHKMDQLSSDFQALQRSLEDLVDRCRQSVQEHCTFSHQLLELRQWIVVTTQKLEAHRGEAGPGDAESQEAEFERLVAEFPEKEAQLSLVEAQGWLVMEKSSPEGAAVVQEELRELAESWRALRLLEESLLSLIRNWHLQRMEVDSGKKMVFTNNIPKSGFLINPMDPIPRHRRRANLLQEEEGSHEDFSQLLRNFGQWLQVENSKLVRIIAMRTSTAEDLRTRKSKLQELEARVPEGQHLFENLLRLGPARGTSDELEDLRYQWMLYKSKLKDSGHLLTQSSPGEPTGFQKTRRWRGLGSLFRRACCVALPLQLLLLLFLLLLFLLPIREEDRSCTLANNFARSFTLMLRYNGPPPT.

The Cytoplasmic portion of the chain corresponds to 1–925 (MTQQPQDDFD…LGSLFRRACC (925 aa)). One copy of the Spectrin 1 repeat lies at 220-325 (REHEEYQAGV…WEEEEERLRG (106 aa)). Residues 617–645 (NHQHKMDQLSSDFQALQRSLEDLVDRCRQ) are a coiled coil. A Spectrin 2 repeat occupies 647 to 740 (VQEHCTFSHQ…RELAESWRAL (94 aa)). Positions 917-975 (GSLFRRACCVALPLQLLLLLFLLLLFLLPIREEDRSCTLANNFARSFTLMLRYNGPPPT) constitute a KASH domain. Residues 926–946 (VALPLQLLLLLFLLLLFLLPI) form a helical; Anchor for type IV membrane protein membrane-spanning segment. The Perinuclear space segment spans residues 947 to 975 (REEDRSCTLANNFARSFTLMLRYNGPPPT).

The protein belongs to the nesprin family. As to quaternary structure, core component of LINC complexes which are composed of inner nuclear membrane SUN domain-containing proteins coupled to outer nuclear membrane KASH domain-containing nesprins. SUN and KASH domain-containing proteins seem to bind each other promiscuously; however, differentially expression of LINC complex constituents can give rise to specific assemblies. Interacts with SUN1 and SUN2; probably forming respective LINC complexes. Interacts with PLEC (via actin-binding domain). Interacts with DST. Interacts with SYNE1 via spectrin repeats. Interacts (via KASH domain) with TOR1A (ATP-bound); the interaction is required for SYNE3 nuclear envelope localization. Post-translationally, the disulfid bond with SUN1 or SUN2 is required for stability of the respective LINC complex under tensile forces. As to expression, expressed in aortic endothelial cells (at protein level).

The protein resides in the nucleus outer membrane. Its subcellular location is the nucleus envelope. The protein localises to the rough endoplasmic reticulum. In terms of biological role, as a component of the LINC (LInker of Nucleoskeleton and Cytoskeleton) complex involved in the connection between the nuclear lamina and the cytoskeleton. The nucleocytoplasmic interactions established by the LINC complex play an important role in the transmission of mechanical forces across the nuclear envelope and in nuclear movement and positioning. Probable anchoring protein which tethers the nucleus to the cytoskeleton by binding PLEC which can associate with the intermediate filament system. Plays a role in the regulation of aortic epithelial cell morphology, and is required for flow-induced centrosome polarization and directional migration in aortic endothelial cells. This is Nesprin-3 from Homo sapiens (Human).